We begin with the raw amino-acid sequence, 156 residues long: Protein eva-1 homolog A (156 aa).

A helical membrane pass occupies residues 40–60 (ALYFVSGVCIGLFLTLAALVM). Residues 79–100 (DRECSDSSDSEDGSEDTASDLS) form a disordered region. Over residues 84–96 (DSSDSEDGSEDTA) the composition is skewed to acidic residues. Phosphothreonine is present on Thr110. Ser118 carries the phosphoserine modification.

The protein belongs to the EVA1 family.

The protein localises to the endoplasmic reticulum membrane. It localises to the lysosome membrane. Acts as a regulator of programmed cell death, mediating both autophagy and apoptosis. The polypeptide is Protein eva-1 homolog A (Eva1a) (Mus musculus (Mouse)).